The following is a 254-amino-acid chain: Protein Thf1 (254 aa).

Residues 182-241 (EEKMKKDLDLYRSNLEKMNQVLEVLEDALAVERQRREKAEAEAKAKTAEATVATETNDEQ) are a coiled coil. Residues 215–228 (QRREKAEAEAKAKT) are compositionally biased toward basic and acidic residues. A disordered region spans residues 215 to 254 (QRREKAEAEAKAKTAEATVATETNDEQDEQKETSESGSDA).

Belongs to the THF1 family.

May be involved in photosynthetic membrane biogenesis. This is Protein Thf1 from Picosynechococcus sp. (strain ATCC 27264 / PCC 7002 / PR-6) (Agmenellum quadruplicatum).